The primary structure comprises 235 residues: Large ribosomal subunit protein uL2 (235 aa).

The interval 197-218 (VAMNPVDHPHGGGEGKTSGGRH) is disordered.

This sequence belongs to the universal ribosomal protein uL2 family. As to quaternary structure, part of the 50S ribosomal subunit. Forms a bridge to the 30S subunit in the 70S ribosome.

Its function is as follows. One of the primary rRNA binding proteins. Required for association of the 30S and 50S subunits to form the 70S ribosome, for tRNA binding and peptide bond formation. It has been suggested to have peptidyltransferase activity; this is somewhat controversial. Makes several contacts with the 16S rRNA in the 70S ribosome. This is Large ribosomal subunit protein uL2 (rplB) from Carsonella ruddii (strain PV).